We begin with the raw amino-acid sequence, 396 residues long: NADH-quinone oxidoreductase subunit D (396 aa).

This sequence belongs to the complex I 49 kDa subunit family. In terms of assembly, NDH-1 is composed of 14 different subunits. Subunits NuoB, C, D, E, F, and G constitute the peripheral sector of the complex.

The protein localises to the cell inner membrane. It carries out the reaction a quinone + NADH + 5 H(+)(in) = a quinol + NAD(+) + 4 H(+)(out). NDH-1 shuttles electrons from NADH, via FMN and iron-sulfur (Fe-S) centers, to quinones in the respiratory chain. The immediate electron acceptor for the enzyme in this species is believed to be ubiquinone. Couples the redox reaction to proton translocation (for every two electrons transferred, four hydrogen ions are translocated across the cytoplasmic membrane), and thus conserves the redox energy in a proton gradient. The sequence is that of NADH-quinone oxidoreductase subunit D from Brucella suis biovar 1 (strain 1330).